A 750-amino-acid polypeptide reads, in one-letter code: Photosystem I P700 chlorophyll a apoprotein A1 (750 aa).

8 helical membrane-spanning segments follow: residues 70 to 93 (IFSAHFGQLSIIFLWLSGMYFHGA), 156 to 179 (LYCTAIGALVFAALMLFAGWFHYH), 195 to 219 (LNHHLAGLLGLGSLSWAGHQVHVSL), 291 to 309 (IAHHHLAIAILFLIAGHMY), 346 to 369 (WHAQLALNLAMLGSLTIVVAHHMY), 385 to 411 (LSLFTHHMWIGGFLIVGAAAHAAIFMV), 433 to 455 (AIISHLNWACIFLGFHSFGLYIH), and 531 to 549 (FLVHHIHAFTIHVTVLILL). [4Fe-4S] cluster contacts are provided by Cys573 and Cys582. A run of 2 helical transmembrane segments spans residues 589–610 (HVFLGLFWMYNAISVVIFHFSW) and 664–686 (LSAYGLFFLGAHFVWAFSLMFLF). His675 provides a ligand contact to chlorophyll a'. Chlorophyll a contacts are provided by Met683 and Tyr691. Phylloquinone is bound at residue Trp692. A helical membrane pass occupies residues 724 to 744 (AVGVTHYLLGGIATTWAFFLA).

This sequence belongs to the PsaA/PsaB family. In terms of assembly, the PsaA/B heterodimer binds the P700 chlorophyll special pair and subsequent electron acceptors. PSI consists of a core antenna complex that captures photons, and an electron transfer chain that converts photonic excitation into a charge separation. The eukaryotic PSI reaction center is composed of at least 11 subunits. Requires P700 is a chlorophyll a/chlorophyll a' dimer, A0 is one or more chlorophyll a, A1 is one or both phylloquinones and FX is a shared 4Fe-4S iron-sulfur center. as cofactor.

Its subcellular location is the plastid. The protein localises to the chloroplast thylakoid membrane. The catalysed reaction is reduced [plastocyanin] + hnu + oxidized [2Fe-2S]-[ferredoxin] = oxidized [plastocyanin] + reduced [2Fe-2S]-[ferredoxin]. PsaA and PsaB bind P700, the primary electron donor of photosystem I (PSI), as well as the electron acceptors A0, A1 and FX. PSI is a plastocyanin-ferredoxin oxidoreductase, converting photonic excitation into a charge separation, which transfers an electron from the donor P700 chlorophyll pair to the spectroscopically characterized acceptors A0, A1, FX, FA and FB in turn. Oxidized P700 is reduced on the lumenal side of the thylakoid membrane by plastocyanin. The sequence is that of Photosystem I P700 chlorophyll a apoprotein A1 from Nandina domestica (Heavenly bamboo).